A 301-amino-acid polypeptide reads, in one-letter code: Probable alpha-L-glutamate ligase (301 aa).

Positions 104 to 287 constitute an ATP-grasp domain; it reads LQLLSRKGIG…VADEIIRFIE (184 aa). Residues lysine 141, 178–179, aspartate 187, and 211–213 contribute to the ATP site; these read EF and RSN. Residues aspartate 248, glutamate 260, and asparagine 262 each coordinate Mg(2+). 3 residues coordinate Mn(2+): aspartate 248, glutamate 260, and asparagine 262.

This sequence belongs to the RimK family. Mg(2+) is required as a cofactor. Mn(2+) serves as cofactor.

The sequence is that of Probable alpha-L-glutamate ligase from Syntrophotalea carbinolica (strain DSM 2380 / NBRC 103641 / GraBd1) (Pelobacter carbinolicus).